The primary structure comprises 148 residues: Truncated transcription factor CAULIFLOWER C (148 aa).

In terms of domain architecture, MADS-box spans 1 to 61; it reads MGRGRVEMKR…GKLFEYSSES (61 aa). Residues 90-148 enclose the K-box; partial domain; the sequence is QTNWSMEYSRLKAKIELWERNQRHYLGEDLESISIKELQNLEQQLDTSLKHIPSRKVCK.

In terms of assembly, homodimer capable of binding to CArG-box sequences.

Its subcellular location is the nucleus. Functionally, probable transcription factor that promotes early floral meristem identity in synergy with APETALA1, FRUITFULL and LEAFY. Is required subsequently for the transition of an inflorescence meristem into a floral meristem. Seems to be partially redundant to the function of APETALA1. The protein is Truncated transcription factor CAULIFLOWER C (CAL-C) of Brassica oleracea var. botrytis (Cauliflower).